Consider the following 518-residue polypeptide: Coiled-coil domain-containing protein 82 (518 aa).

A compositionally biased stretch (basic residues) spans 1–14 (MVHVRRHETRKNSK). A disordered region spans residues 1–266 (MVHVRRHETR…EDDYRYDEDG (266 aa)). The span at 16–27 (QKPEQKSRVDWH) shows a compositional bias: basic and acidic residues. Positions 38–67 (DSDEELDSNEELDSDEEHDSGESIDSDEEL) are enriched in acidic residues. Residues 68–89 (DISKKSDINELPEKETELKLIK) show a composition bias toward basic and acidic residues. Over residues 92-107 (SQGSNSKHLTNTSNSS) the composition is skewed to polar residues. Basic and acidic residues predominate over residues 111-127 (EQLKETKHNDLPDDEAH). 2 positions are modified to phosphoserine: S170 and S194. Acidic residues predominate over residues 191–201 (DECSSLEMEQE). Position 202 is a phosphothreonine (T202). A coiled-coil region spans residues 204 to 232 (EKSSAARKREYHQKLQELSERSRQRRRRN). A compositionally biased stretch (basic and acidic residues) spans 215–225 (HQKLQELSERS). Positions 249–266 (GEEDEDEDEDDYRYDEDG) are enriched in acidic residues. S305 carries the post-translational modification Phosphoserine.

This is Coiled-coil domain-containing protein 82 (Ccdc82) from Mus musculus (Mouse).